The primary structure comprises 145 residues: Sec-independent protein translocase protein TatB (145 aa).

The chain crosses the membrane as a helical span at residues 1 to 21 (MLDVGMTELLCFAIIAILVLG).

It belongs to the TatB family. As to quaternary structure, the Tat system comprises two distinct complexes: a TatABC complex, containing multiple copies of TatA, TatB and TatC subunits, and a separate TatA complex, containing only TatA subunits. Substrates initially bind to the TatABC complex, which probably triggers association of the separate TatA complex to form the active translocon.

It localises to the cell inner membrane. In terms of biological role, part of the twin-arginine translocation (Tat) system that transports large folded proteins containing a characteristic twin-arginine motif in their signal peptide across membranes. Together with TatC, TatB is part of a receptor directly interacting with Tat signal peptides. TatB may form an oligomeric binding site that transiently accommodates folded Tat precursor proteins before their translocation. The sequence is that of Sec-independent protein translocase protein TatB from Acinetobacter baumannii (strain ATCC 17978 / DSM 105126 / CIP 53.77 / LMG 1025 / NCDC KC755 / 5377).